Consider the following 50-residue polypeptide: Defensin-like protein 1 (50 aa).

4 disulfide bridges follow: C3-C50, C14-C35, C20-C44, and C24-C46.

It belongs to the DEFL family.

It is found in the secreted. Its function is as follows. Possesses antimicrobial activity sensitive to inorganic cations. Has no inhibitory effect on insect gut alpha-amylase. Induces potential changes in fungal membranes and increased K+ efflux and Ca(2+) uptake. Interacts with sphingolipids and ergosterols found in fungal plasma membranes. The chain is Defensin-like protein 1 from Dahlia merckii (Bedding dahlia).